The following is a 77-amino-acid chain: Protein RADIALIS-like 4 (77 aa).

The 56-residue stretch at 6–61 (MSTSSWTAREDKQFEMALAKFDKDTPDRWQKIARAVGGKSTEEVKRHYELLLRDVN) folds into the SANT domain.

As to expression, expressed just outside the vascular bundles in the rosette stem and the leaf traces. Not detected in floral primordia.

The protein resides in the nucleus. Its function is as follows. Probable transcription factor. The chain is Protein RADIALIS-like 4 (RL4) from Arabidopsis thaliana (Mouse-ear cress).